The chain runs to 335 residues: Protein-glutamate methylesterase/protein-glutamine glutaminase 3 (335 aa).

The 118-residue stretch at 2 to 119 (RIGIVNDMPL…GNPQTAAAPL (118 aa)) folds into the Response regulatory domain. D53 is subject to 4-aspartylphosphate. The CheB-type methylesterase domain maps to 144 to 335 (PKAGGARQRL…IAPRLAEVFD (192 aa)). Residues S159, H186, and D279 contribute to the active site.

It belongs to the CheB family. In terms of processing, phosphorylated by CheA. Phosphorylation of the N-terminal regulatory domain activates the methylesterase activity.

It localises to the cytoplasm. The catalysed reaction is [protein]-L-glutamate 5-O-methyl ester + H2O = L-glutamyl-[protein] + methanol + H(+). It catalyses the reaction L-glutaminyl-[protein] + H2O = L-glutamyl-[protein] + NH4(+). Its function is as follows. Involved in chemotaxis. Part of a chemotaxis signal transduction system that modulates chemotaxis in response to various stimuli. Catalyzes the demethylation of specific methylglutamate residues introduced into the chemoreceptors (methyl-accepting chemotaxis proteins or MCP) by CheR. Also mediates the irreversible deamidation of specific glutamine residues to glutamic acid. The chain is Protein-glutamate methylesterase/protein-glutamine glutaminase 3 from Pseudomonas aeruginosa (strain ATCC 15692 / DSM 22644 / CIP 104116 / JCM 14847 / LMG 12228 / 1C / PRS 101 / PAO1).